A 217-amino-acid polypeptide reads, in one-letter code: Probable GTP-binding protein EngB (217 aa).

One can recognise an EngB-type G domain in the interval 44–217 (DRVEVCFAGR…TLRSIIAHLE (174 aa)). GTP-binding positions include 52 to 59 (GRSNVGKS), 79 to 83 (GRTQE), 97 to 100 (DLPG), 164 to 167 (TKAD), and 198 to 200 (TSS). Positions 59 and 81 each coordinate Mg(2+).

It belongs to the TRAFAC class TrmE-Era-EngA-EngB-Septin-like GTPase superfamily. EngB GTPase family. The cofactor is Mg(2+).

Functionally, necessary for normal cell division and for the maintenance of normal septation. The protein is Probable GTP-binding protein EngB of Ruegeria pomeroyi (strain ATCC 700808 / DSM 15171 / DSS-3) (Silicibacter pomeroyi).